We begin with the raw amino-acid sequence, 883 residues long: Collagen, type I, alpha 1b (883 aa).

The disordered stretch occupies residues 1–883 (QMSYVDHSKS…LGGSNDVELR (883 aa)). Pro residues predominate over residues 13-33 (PPQPGPMGPMGPRGPPGPPGS). Composition is skewed to low complexity over residues 34–57 (SGPQ…AMGS), 113–122 (VPGVMGARGR), and 129–140 (SGARGNDGNTGP). Gly residues-rich tracts occupy residues 147 to 161 (TGGE…GNEG) and 185 to 194 (GTDGGPGAKG). 3 stretches are compositionally biased toward low complexity: residues 195 to 205 (SPGAAGLAGAP), 214 to 223 (AQGAVGAPGP), and 230 to 248 (PGAS…PGPA). Positions 285-297 (GADGGAGGKGAPG) are enriched in gly residues. Composition is skewed to low complexity over residues 310–326 (ATGE…PGSK) and 390–402 (VGAP…AGPA). Positions 415–424 (GAPGLGGPTG) are enriched in gly residues. A compositionally biased stretch (low complexity) spans 425–444 (ARGAPGPAGNDGAKGEPGAA). Composition is skewed to gly residues over residues 445–454 (GAPGGLGAPG) and 478–487 (GGKGGDGAPG). Low complexity predominate over residues 512–542 (AGPTGPRGETGPPGPAGFAGPPGADGQPGAK). Over residues 564-573 (GPKGGAGPPG) the composition is skewed to gly residues. Low complexity-rich tracts occupy residues 574 to 584 (ATGFPGPAGRV), 717 to 726 (APGAVGPSGK), and 742 to 756 (SGPA…PAGA). Over residues 757 to 771 (KGDRGEAGEAGDRGH) the composition is skewed to basic and acidic residues. Residues 792-812 (PAGASGPAGPRGPAGSNGAPG) show a composition bias toward low complexity. Over residues 821 to 836 (AGPPGPPGPAGPPGPP) the composition is skewed to pro residues.

The protein belongs to the fibrillar collagen family.

In Epinephelus costae (Goldblotch grouper), this protein is Collagen, type I, alpha 1b.